The sequence spans 693 residues: TGF-beta-activated kinase 1 and MAP3K7-binding protein 2 (693 aa).

The 44-residue stretch at 8–51 folds into the CUE domain; sequence IDFQVLHDLRQKFPEVPEVVVSRCMLQNNNNLDACCAVLSQEST. A disordered region spans residues 91 to 130; the sequence is GREGSRMNGSRTLTHSISDGQLQGGQSNSELFQQEPQTAP. Positions 97-130 are enriched in polar residues; sequence MNGSRTLTHSISDGQLQGGQSNSELFQQEPQTAP. The residue at position 173 (R173) is an Asymmetric dimethylarginine. The interval 219–310 is disordered; the sequence is ITTPGGTTRQ…SGSSQSSAHS (92 aa). Low complexity predominate over residues 220-231; that stretch reads TTPGGTTRQTQQ. The span at 232–282 shows a compositional bias: polar residues; that stretch reads HSGWVSQFNPMNPQQVYQPSQPGPWTTCPASNPLSHTSSQQPNQQGHQTSH. A compositionally biased stretch (low complexity) spans 286–310; sequence PISSPTTSQPPTIHSSGSSQSSAHS. Residue K329 forms a Glycyl lysine isopeptide (Lys-Gly) (interchain with G-Cter in SUMO) linkage. Positions 330 to 381 are disordered; the sequence is LEPPQRNNSSKLRSSGPRTSSTSSSVNSQTLNRNQPTVYIAASPPNTDELMS. The span at 343–359 shows a compositional bias: low complexity; it reads SSGPRTSSTSSSVNSQT. A phosphoserine mark is found at S372, S450, S482, and S524. Positions 532-619 form a coiled coil; it reads YTQALLVHQK…TKEIDLFQAR (88 aa). K562 participates in a covalent cross-link: Glycyl lysine isopeptide (Lys-Gly) (interchain with G-Cter in SUMO). The residue at position 582 (S582) is a Phosphoserine. A Glycyl lysine isopeptide (Lys-Gly) (interchain with G-Cter in ubiquitin) cross-link involves residue K611. The segment at 642–663 is disordered; that stretch reads PPKPKDQRSIIKTPKTQDTEDD. The RanBP2-type zinc-finger motif lies at 663 to 693; sequence DEGAQWNCTACTFLNHPALIRCEQCEMPRHF. C673 carries the post-translational modification (Microbial infection) S-methylcysteine. Residues 675–685 form an interaction with polyubiquitin region; that stretch reads FLNHPALIRCE.

Interacts with MAP3K7 and TRAF6. Identified in the TRIKA2 complex composed of MAP3K7, TAB1 and TAB2. Binds 'Lys-63'-linked polyubiquitin chains. Interacts with NCOR1 and HDAC3 to form a ternary complex. Interacts (via C-terminal) with NUMBL (via PTB domain). Interacts (via the C-terminus) with DYNC2I2 (via WD domains). Interacts with RBCK1. Interacts with TRIM5. Interacts with TRIM38 (via B30.2/SPRY domain), leading to its translocation to lysosomes and degradation. Interacts with ASB1; this interaction promotes TAB2 stability. Post-translationally, degraded in a lysosome-dependent manner following interaction with TRIM38. SUMOylated by TRIM60; leading to inhibition of MAPK/NF-kappaB activation and the innate immune response. In terms of processing, ubiquitinated; following IL1 stimulation or TRAF6 overexpression. Ubiquitination involves RBCK1 leading to proteasomal degradation. Ubiquitinated at Lys-611 by TRIM45 leading to proteasomal degradation. Post-translationally, phosphorylated. (Microbial infection) Methylated at Cys-673 by enteropathogenic E.coli protein NleE or S.flexneri protein OspZ: methylation disrupts zinc-binding and ability to bind 'Lys-63'-linked ubiquitin, leading to NF-kappa-B inactivation. In terms of tissue distribution, widely expressed. In the embryo, expressed in the ventricular trabeculae, endothelial cells of the conotruncal cushions of the outflow tract and in the endothelial cells lining the developing aortic valves.

The protein resides in the membrane. The protein localises to the endosome membrane. It localises to the lysosome membrane. Its subcellular location is the cytoplasm. It is found in the cytosol. Functionally, adapter required to activate the JNK and NF-kappa-B signaling pathways through the specific recognition of 'Lys-63'-linked polyubiquitin chains by its RanBP2-type zinc finger (NZF). Acts as an adapter linking MAP3K7/TAK1 and TRAF6 to 'Lys-63'-linked polyubiquitin chains. The RanBP2-type zinc finger (NZF) specifically recognizes Lys-63'-linked polyubiquitin chains unanchored or anchored to the substrate proteins such as RIPK1/RIP1 and RIPK2: this acts as a scaffold to organize a large signaling complex to promote autophosphorylation of MAP3K7/TAK1, and subsequent activation of I-kappa-B-kinase (IKK) core complex by MAP3K7/TAK1. Also recognizes and binds Lys-63'-linked polyubiquitin chains of heterotypic 'Lys-63'-/'Lys-48'-linked branched ubiquitin chains. Regulates the IL1-mediated translocation of NCOR1 out of the nucleus. Involved in heart development. This Homo sapiens (Human) protein is TGF-beta-activated kinase 1 and MAP3K7-binding protein 2.